The chain runs to 502 residues: Glycogen synthase 1 (502 aa).

Position 18 (K18) interacts with ADP-alpha-D-glucose.

The protein belongs to the glycosyltransferase 1 family. Bacterial/plant glycogen synthase subfamily.

The catalysed reaction is [(1-&gt;4)-alpha-D-glucosyl](n) + ADP-alpha-D-glucose = [(1-&gt;4)-alpha-D-glucosyl](n+1) + ADP + H(+). Its pathway is glycan biosynthesis; glycogen biosynthesis. In terms of biological role, synthesizes alpha-1,4-glucan chains using ADP-glucose. This chain is Glycogen synthase 1, found in Geobacter metallireducens (strain ATCC 53774 / DSM 7210 / GS-15).